A 363-amino-acid chain; its full sequence is UDP-N-acetylglucosamine--N-acetylmuramyl-(pentapeptide) pyrophosphoryl-undecaprenol N-acetylglucosamine transferase (363 aa).

UDP-N-acetyl-alpha-D-glucosamine is bound by residues 10 to 12 (TGG), Asn124, Ser195, Ile250, and Gln295.

Belongs to the glycosyltransferase 28 family. MurG subfamily.

Its subcellular location is the cell membrane. The catalysed reaction is di-trans,octa-cis-undecaprenyl diphospho-N-acetyl-alpha-D-muramoyl-L-alanyl-D-glutamyl-meso-2,6-diaminopimeloyl-D-alanyl-D-alanine + UDP-N-acetyl-alpha-D-glucosamine = di-trans,octa-cis-undecaprenyl diphospho-[N-acetyl-alpha-D-glucosaminyl-(1-&gt;4)]-N-acetyl-alpha-D-muramoyl-L-alanyl-D-glutamyl-meso-2,6-diaminopimeloyl-D-alanyl-D-alanine + UDP + H(+). The protein operates within cell wall biogenesis; peptidoglycan biosynthesis. Functionally, cell wall formation. Catalyzes the transfer of a GlcNAc subunit on undecaprenyl-pyrophosphoryl-MurNAc-pentapeptide (lipid intermediate I) to form undecaprenyl-pyrophosphoryl-MurNAc-(pentapeptide)GlcNAc (lipid intermediate II). This is UDP-N-acetylglucosamine--N-acetylmuramyl-(pentapeptide) pyrophosphoryl-undecaprenol N-acetylglucosamine transferase from Listeria monocytogenes serotype 4a (strain HCC23).